Consider the following 27-residue polypeptide: CD59 glycoprotein (27 aa).

Intrachain disulfides connect Cys-3–Cys-25 and Cys-6–Cys-12. N-linked (GlcNAc...) asparagine glycosylation occurs at Asn-17.

As to quaternary structure, interacts with T-cell surface antigen CD2. Post-translationally, N- and O-glycosylated. In terms of tissue distribution, expressed in erythrocytes and lymphocytes. Not detected in platelets.

It is found in the cell membrane. The protein localises to the secreted. Its function is as follows. Potent inhibitor of the complement membrane attack complex (MAC) action, which protects self-cells from damage during complement activation. Acts by binding to the beta-haipins of C8 (C8A and C8B) components of the assembling MAC, forming an intermolecular beta-sheet that prevents incorporation of the multiple copies of C9 required for complete formation of the osmolytic pore. This chain is CD59 glycoprotein, found in Ovis aries (Sheep).